We begin with the raw amino-acid sequence, 110 residues long: UPF0145 protein LMOf2365_0219 (110 aa).

Belongs to the UPF0145 family.

The chain is UPF0145 protein LMOf2365_0219 from Listeria monocytogenes serotype 4b (strain F2365).